The sequence spans 621 residues: Chaperone protein HtpG (621 aa).

The a; substrate-binding stretch occupies residues 1-341; it reads MSNQEYTFQT…SEDLPLNVSR (341 aa). A b region spans residues 342 to 547; the sequence is EILQQNKILA…GDEQNAMMAN (206 aa). A c region spans residues 548–621; it reads WMRQMGQSVP…RLNSVLLKAL (74 aa).

This sequence belongs to the heat shock protein 90 family. In terms of assembly, homodimer.

Its subcellular location is the cytoplasm. In terms of biological role, molecular chaperone. Has ATPase activity. This chain is Chaperone protein HtpG, found in Helicobacter pylori (strain ATCC 700392 / 26695) (Campylobacter pylori).